The primary structure comprises 129 residues: uncharacterized protein (129 aa).

The span at 84-98 (QKTVSKKYKSRKGRR) shows a compositional bias: basic residues. Positions 84 to 129 (QKTVSKKYKSRKGRRYTRERNISSEKNKTDKSHKVRVGKIQNINND) are disordered. Residues 99–115 (YTRERNISSEKNKTDKS) show a composition bias toward basic and acidic residues.

This is an uncharacterized protein from Acanthamoeba polyphaga mimivirus (APMV).